A 242-amino-acid polypeptide reads, in one-letter code: MDELYSVRMRAAQGGPHENGGHHISGAERIVTLNQVGFIAQSLAERALHHSKGTADFINITVDLIPSETITYIDCLKVKEHTANTVTEAHQLAVKLLQGTDISESAIRNSIFLLKSLVSSMRGAMLVDAISGERLDAGNRGVRVSHMDSFDSDKLGDNEHMREALVLASKVQSAEGIVGELCWSDDPDYTIGYVACNGVYHRIPNMKEIGSNLGGRVFFVKPNIDLEGVIEYLEKEPVLVQW.

It belongs to the BioW family. Homodimer. It depends on Mg(2+) as a cofactor.

The catalysed reaction is heptanedioate + ATP + CoA = 6-carboxyhexanoyl-CoA + AMP + diphosphate. It participates in metabolic intermediate metabolism; pimeloyl-CoA biosynthesis; pimeloyl-CoA from pimelate: step 1/1. In terms of biological role, catalyzes the transformation of pimelate into pimeloyl-CoA with concomitant hydrolysis of ATP to AMP. The sequence is that of 6-carboxyhexanoate--CoA ligase from Veillonella parvula (strain ATCC 10790 / DSM 2008 / CCUG 5123 / JCM 12972 / NCTC 11810 / Te3) (Veillonella alcalescens).